The primary structure comprises 89 residues: Large ribosomal subunit protein bL27 (89 aa).

The tract at residues 1–26 (MATKKAGGSSKNGRDSAGRRLGLKKT) is disordered.

The protein belongs to the bacterial ribosomal protein bL27 family.

The sequence is that of Large ribosomal subunit protein bL27 from Orientia tsutsugamushi (strain Boryong) (Rickettsia tsutsugamushi).